Consider the following 571-residue polypeptide: Proline--tRNA ligase (571 aa).

It belongs to the class-II aminoacyl-tRNA synthetase family. ProS type 1 subfamily. As to quaternary structure, homodimer.

Its subcellular location is the cytoplasm. It carries out the reaction tRNA(Pro) + L-proline + ATP = L-prolyl-tRNA(Pro) + AMP + diphosphate. Functionally, catalyzes the attachment of proline to tRNA(Pro) in a two-step reaction: proline is first activated by ATP to form Pro-AMP and then transferred to the acceptor end of tRNA(Pro). As ProRS can inadvertently accommodate and process non-cognate amino acids such as alanine and cysteine, to avoid such errors it has two additional distinct editing activities against alanine. One activity is designated as 'pretransfer' editing and involves the tRNA(Pro)-independent hydrolysis of activated Ala-AMP. The other activity is designated 'posttransfer' editing and involves deacylation of mischarged Ala-tRNA(Pro). The misacylated Cys-tRNA(Pro) is not edited by ProRS. This is Proline--tRNA ligase from Photobacterium profundum (strain SS9).